The chain runs to 37 residues: MRVRASVKTLCRNCKVVRRRGVVRVICTDPRHKQRQG.

The protein belongs to the bacterial ribosomal protein bL36 family.

This is Large ribosomal subunit protein bL36A from Methylobacillus flagellatus (strain ATCC 51484 / DSM 6875 / VKM B-1610 / KT).